We begin with the raw amino-acid sequence, 173 residues long: Endosomal/vacuolar adapter protein YPT35 (173 aa).

In terms of domain architecture, PX spans 40–173 (ERAFVTNCTI…LVIQFLRPRK (134 aa)).

Belongs to the YPT35 family.

It localises to the endosome membrane. Its subcellular location is the vacuole membrane. In terms of biological role, recruits the lipid transfer protein VPS13 to endosomal and vacuolar membranes. The protein is Endosomal/vacuolar adapter protein YPT35 (YPT35) of Candida glabrata (strain ATCC 2001 / BCRC 20586 / JCM 3761 / NBRC 0622 / NRRL Y-65 / CBS 138) (Yeast).